The chain runs to 537 residues: Synaptotagmin-2 (537 aa).

Topologically, residues 1–2 (MG) are cytoplasmic. A helical membrane pass occupies residues 3–23 (IISTILGVIGFGFGTTIGIVI). Topologically, residues 24 to 537 (GYYLFIYFQS…QIELQWRNSS (514 aa)) are lumenal. The region spanning 67–249 (DFDRIDWLNK…WPKTLNVQIM (183 aa)) is the SMP-LTD domain. Positions 227–505 (QEIIKDQVAN…TLGYVVINLG (279 aa)) are phospholipid binding. 2 C2 domains span residues 240–362 (WPKT…LMTL) and 402–517 (DPNA…NDKY). Ca(2+) contacts are provided by Asp276, Asp282, Asp332, and Glu334.

This sequence belongs to the synaptotagmin family. It depends on Ca(2+) as a cofactor.

It localises to the golgi apparatus membrane. May play an important role in regulating an unconventional protein trafficking from the cytosol to the extracellular matrix. The sequence is that of Synaptotagmin-2 (SYT2) from Arabidopsis thaliana (Mouse-ear cress).